Here is a 300-residue protein sequence, read N- to C-terminus: Ubiquinone biosynthesis protein COQ4, mitochondrial (300 aa).

Residues histidine 173, aspartate 174, histidine 177, and glutamate 189 each coordinate Zn(2+).

Belongs to the COQ4 family. Component of a multi-subunit COQ enzyme complex, composed of at least COQ3, COQ4, COQ5, COQ6, COQ7 and COQ9. Zn(2+) is required as a cofactor.

Its subcellular location is the mitochondrion inner membrane. It carries out the reaction a 4-hydroxy-3-methoxy-5-(all-trans-polyprenyl)benzoate + H(+) = a 2-methoxy-6-(all-trans-polyprenyl)phenol + CO2. Its pathway is cofactor biosynthesis; ubiquinone biosynthesis. Its function is as follows. Lyase that catalyzes the C1-decarboxylation of 4-hydroxy-3-methoxy-5-(all-trans-polyprenyl)benzoic acid into 2-methoxy-6-(all-trans-polyprenyl)phenol during ubiquinone biosynthesis. The polypeptide is Ubiquinone biosynthesis protein COQ4, mitochondrial (Cryptococcus neoformans var. neoformans serotype D (strain JEC21 / ATCC MYA-565) (Filobasidiella neoformans)).